An 84-amino-acid chain; its full sequence is Small ribosomal subunit protein uS17 (84 aa).

Belongs to the universal ribosomal protein uS17 family. Part of the 30S ribosomal subunit.

In terms of biological role, one of the primary rRNA binding proteins, it binds specifically to the 5'-end of 16S ribosomal RNA. The polypeptide is Small ribosomal subunit protein uS17 (Clostridium perfringens (strain ATCC 13124 / DSM 756 / JCM 1290 / NCIMB 6125 / NCTC 8237 / Type A)).